The primary structure comprises 510 residues: Internal alternative NAD(P)H-ubiquinone oxidoreductase A1, mitochondrial (510 aa).

A mitochondrion-targeting transit peptide spans 1-48; sequence MLWIKNLARISQTTSSSVGNVFRNPESYTLSSRFCTALQKQQVTDTVQ. 75 to 105 lines the FAD pocket; it reads RVLVLGSGWAGCRVLKGIDTSIYDVVCVSPR. Residue 242 to 278 participates in NAD(+) binding; sequence LHCVVVGGGPTGVEFSGELSDFIMKDVRQRYSHVKDD. Residues 501–510 carry the Microbody targeting signal motif; the sequence is FVFGRDISRI.

The protein belongs to the NADH dehydrogenase family. It depends on FAD as a cofactor. As to expression, expressed in seedlings, cotyledons, young leaves, stems and flowers and, to a lower extent, in roots and buds.

Its subcellular location is the mitochondrion inner membrane. The protein resides in the peroxisome. The enzyme catalyses a quinone + NADH + H(+) = a quinol + NAD(+). It catalyses the reaction a ubiquinone + NADH + H(+) = a ubiquinol + NAD(+). Alternative NADH-ubiquinone oxidoreductase which catalyzes the oxidation of mitochondrial NADH does not translocate protons across the inner mitochondrial membrane. The protein is Internal alternative NAD(P)H-ubiquinone oxidoreductase A1, mitochondrial (NDA1) of Arabidopsis thaliana (Mouse-ear cress).